We begin with the raw amino-acid sequence, 37 residues long: U1-ectatotoxin-Eb1a subunit B (37 aa).

Belongs to the ectatomin family. Ectatomin-Eq subfamily. In terms of assembly, heterodimer of subunits A and B; disulfide-linked. As to expression, expressed by the venom gland.

The protein resides in the secreted. Its subcellular location is the target cell membrane. This chain is U1-ectatotoxin-Eb1a subunit B, found in Ectatomma brunneum (Ant).